A 361-amino-acid polypeptide reads, in one-letter code: Serpentine receptor class X 45 (361 aa).

A run of 7 helical transmembrane segments spans residues 20 to 40 (LLIFFTSFIGFACNTFIAFYI), 58 to 78 (AAGDAVFVLVWAFYFAPVLFF), 92 to 112 (FAQLCLICYDISIYTHLVISL), 133 to 153 (TTFLICSIIFVSFGFSWFLVI), 176 to 196 (MINVYYAEFFRGLIVISMFAI), 242 to 262 (LLYVIELVTYFYISLRFPVPL), and 278 to 298 (LLTTYAWILVHALDGVITLIF). An N-linked (GlcNAc...) asparagine glycan is attached at Asn-317.

This sequence belongs to the G-protein coupled receptor 1 family.

The protein resides in the cell membrane. The polypeptide is Serpentine receptor class X 45 (srx-45) (Caenorhabditis elegans).